The primary structure comprises 185 residues: Coiled-coil domain-containing protein 32 (185 aa).

Residues 78–98 (LASLEKKLRRIKGLNQEVTSK) are a coiled coil. The segment at 159-185 (IPPESQVEKPVAEDEPAAGDKPAAAEQ) is disordered.

Interacts with AP2S1; the interaction is direct and mediates association with adaptor protein complex 2 (AP-2).

The protein localises to the membrane. Its subcellular location is the coated pit. Its function is as follows. Regulates clathrin-mediated endocytsois of cargos such as transferrin probably through the association and modulation of adaptor protein complex 2 (AP-2). Has a role in ciliogenesis. Required for proper cephalic and left/right axis development. The protein is Coiled-coil domain-containing protein 32 of Homo sapiens (Human).